The sequence spans 573 residues: Probable D-xylulose kinase A (573 aa).

Residues H100, R171, D287, and N288 each contribute to the substrate site. Residues W368, 473–474, and N477 contribute to the ATP site; that span reads GG.

Belongs to the FGGY kinase family.

The protein resides in the cytoplasm. The enzyme catalyses D-xylulose + ATP = D-xylulose 5-phosphate + ADP + H(+). Highly specific D-xylulose kinase which participates in the catabolism of xylose. Xylose is a major component of hemicelluloses such as xylan. Most fungi utilize D-xylose via three enzymatic reactions, xylose reductase (XR), xylitol dehydrogenase (XDH), and xylulokinase, to form xylulose 5-phosphate, which enters pentose phosphate pathway. This Aspergillus terreus (strain NIH 2624 / FGSC A1156) protein is Probable D-xylulose kinase A (xkiA).